A 569-amino-acid polypeptide reads, in one-letter code: Putative tail sheath protein (569 aa).

Residues 1 to 32 are disordered; it reads MAVEQFPRKKVSRPHTEITVDTSGIGGSSSSS.

Its subcellular location is the virion. This is Putative tail sheath protein from Enterococcus phage phiEF24C (Enterococcus bacteriophage phi-EF24C).